Here is a 553-residue protein sequence, read N- to C-terminus: Hydroxylamine reductase (553 aa).

Cys-3, Cys-6, Cys-18, and Cys-25 together coordinate [2Fe-2S] cluster. Residues His-252, Glu-276, Cys-320, Cys-408, Cys-436, Cys-461, Glu-495, and Lys-497 each contribute to the hybrid [4Fe-2O-2S] cluster site. Cys-408 bears the Cysteine persulfide mark.

This sequence belongs to the HCP family. It depends on [2Fe-2S] cluster as a cofactor. Hybrid [4Fe-2O-2S] cluster serves as cofactor.

The protein localises to the cytoplasm. It catalyses the reaction A + NH4(+) + H2O = hydroxylamine + AH2 + H(+). Catalyzes the reduction of hydroxylamine to form NH(3) and H(2)O. The protein is Hydroxylamine reductase of Photobacterium phosphoreum.